The following is a 338-amino-acid chain: MSSPLITDFLHQAGRAAVIAGGLGTELQRHGADLNDPLWSAKCLLSCPHLIRQVHLDYLENGADIIITASYQATIQGFKAKGFSDEEGEALLRRSVEIAREARDLYYQRCAESSSDNGDDSRILKQRPILIAGSVGSYGAYLADGSEFSGNYGDAIKSETLKDFHRRKVQILADSGVDLLAFEAVPNKLEAQAYADLLEEENIITPAWFAFTSKDGNNVVSGDSIEECGSIAESCDKVVAVGINCTPPRFIHDLILLLKKVTAKPIVIYPNSGETYDAIRKEWGQNSGVTDEDFVSYVDKWCESGASLVGGCCRTTPDTIRGIYKILSSGQSPTFSAK.

Residues 1 to 327 enclose the Hcy-binding domain; it reads MSSPLITDFL…DTIRGIYKIL (327 aa). Residues Cys-245, Cys-312, and Cys-313 each coordinate Zn(2+).

In terms of assembly, monomer. Zn(2+) serves as cofactor. Present in all tissues tested.

The catalysed reaction is S-methyl-L-methionine + L-selenocysteine = Se-methyl-L-selenocysteine + L-methionine + H(+). Its function is as follows. Catalyzes the methylation of selenocysteine with S-methylmethionine as donor. Does not methylate cysteine. The polypeptide is Selenocysteine methyltransferase (SMTA) (Astragalus bisulcatus (Two-grooved milkvetch)).